We begin with the raw amino-acid sequence, 741 residues long: Pentatricopeptide repeat-containing protein At3g58590 (741 aa).

PPR repeat units follow at residues 48–78, 79–113, 114–146, 148–178, 179–213, 214–248, 249–279, 280–314, 315–349, 350–380, 381–414, 415–445, 446–481, 483–508, 509–543, 544–578, 580–610, 611–645, 646–680, and 681–715; these read PVYV…MPER, NKVS…GYLP, NQST…GLFM, DAFV…MPFK, SLET…GASL, TESS…GLDC, EISV…AGSW, DIVS…GFSP, NQGT…GCET, GIVL…IRDK, NIVC…GFRP, TEYT…GYED, NDYV…SVVP, NIVA…LEQP, DTVS…NIRP, DKYT…DFSC, DTFV…TREK, NLIT…GFKP, DRVS…GVEP, and EMDH…ADAP.

This sequence belongs to the PPR family. P subfamily.

This Arabidopsis thaliana (Mouse-ear cress) protein is Pentatricopeptide repeat-containing protein At3g58590.